The primary structure comprises 237 residues: Ribonuclease PH (237 aa).

Phosphate is bound by residues R86 and G124 to R126.

The protein belongs to the RNase PH family. Homohexameric ring arranged as a trimer of dimers.

The catalysed reaction is tRNA(n+1) + phosphate = tRNA(n) + a ribonucleoside 5'-diphosphate. In terms of biological role, phosphorolytic 3'-5' exoribonuclease that plays an important role in tRNA 3'-end maturation. Removes nucleotide residues following the 3'-CCA terminus of tRNAs; can also add nucleotides to the ends of RNA molecules by using nucleoside diphosphates as substrates, but this may not be physiologically important. Probably plays a role in initiation of 16S rRNA degradation (leading to ribosome degradation) during starvation. The sequence is that of Ribonuclease PH from Bradyrhizobium sp. (strain BTAi1 / ATCC BAA-1182).